We begin with the raw amino-acid sequence, 37 residues long: Large ribosomal subunit protein bL36 (37 aa).

This sequence belongs to the bacterial ribosomal protein bL36 family.

The chain is Large ribosomal subunit protein bL36 from Shewanella frigidimarina (strain NCIMB 400).